The sequence spans 190 residues: Potassium-transporting ATPase KdpC subunit (190 aa).

A helical membrane pass occupies residues 9 to 29 (VMFILFTIICGGIYPSVVTGI).

The protein belongs to the KdpC family. In terms of assembly, the system is composed of three essential subunits: KdpA, KdpB and KdpC.

Its subcellular location is the cell inner membrane. Part of the high-affinity ATP-driven potassium transport (or Kdp) system, which catalyzes the hydrolysis of ATP coupled with the electrogenic transport of potassium into the cytoplasm. This subunit acts as a catalytic chaperone that increases the ATP-binding affinity of the ATP-hydrolyzing subunit KdpB by the formation of a transient KdpB/KdpC/ATP ternary complex. This Citrifermentans bemidjiense (strain ATCC BAA-1014 / DSM 16622 / JCM 12645 / Bem) (Geobacter bemidjiensis) protein is Potassium-transporting ATPase KdpC subunit.